Here is a 398-residue protein sequence, read N- to C-terminus: tRNA-specific 2-thiouridylase MnmA (398 aa).

ATP-binding positions include 19 to 26 (AMSGGVDS) and leucine 45. The active-site Nucleophile is cysteine 113. Cysteines 113 and 210 form a disulfide. ATP is bound at residue glycine 137. Positions 160–162 (RDQ) are interaction with tRNA. The Cysteine persulfide intermediate role is filled by cysteine 210.

The protein belongs to the MnmA/TRMU family.

It is found in the cytoplasm. The enzyme catalyses S-sulfanyl-L-cysteinyl-[protein] + uridine(34) in tRNA + AH2 + ATP = 2-thiouridine(34) in tRNA + L-cysteinyl-[protein] + A + AMP + diphosphate + H(+). In terms of biological role, catalyzes the 2-thiolation of uridine at the wobble position (U34) of tRNA, leading to the formation of s(2)U34. The polypeptide is tRNA-specific 2-thiouridylase MnmA (Rhodopseudomonas palustris (strain BisB5)).